A 67-amino-acid polypeptide reads, in one-letter code: DNA-directed RNA polymerase subunit omega (67 aa).

It belongs to the RNA polymerase subunit omega family. The RNAP catalytic core consists of 2 alpha, 1 beta, 1 beta' and 1 omega subunit. When a sigma factor is associated with the core the holoenzyme is formed, which can initiate transcription.

It carries out the reaction RNA(n) + a ribonucleoside 5'-triphosphate = RNA(n+1) + diphosphate. In terms of biological role, promotes RNA polymerase assembly. Latches the N- and C-terminal regions of the beta' subunit thereby facilitating its interaction with the beta and alpha subunits. The polypeptide is DNA-directed RNA polymerase subunit omega (rpoZ) (Treponema pallidum (strain Nichols)).